The primary structure comprises 348 residues: Doublesex- and mab-3-related transcription factor dmd-10 (348 aa).

DNA-binding regions (DM) lie at residues 43–91 and 119–166; these read CQRC…YNQF and CQKC…KIRR. The tract at residues 316–348 is disordered; sequence SMSMSSSPSKDDESGDEDSDGLNSNSIIDVITV.

The protein belongs to the DMRT family. As to expression, dimorphically expressed in the dimorphically connected interneuron AVG; expression is observed in the AVG in males, but not in hermaphrodites.

Its subcellular location is the nucleus. Its function is as follows. Transcription factor. Plays a role in neuronal signaling in polymodal sensory neuron ASH, downstream of sensory receptor activation. Required for maintenance of AVG synapses. This Caenorhabditis elegans protein is Doublesex- and mab-3-related transcription factor dmd-10.